The chain runs to 94 residues: MSSDDKSKSNDPKTEPKNCDPKCEQKCESKCQPSCLKKLLQRCSEKCPREKCPAPPKCPPCPSPSPSSCPPKPCAKPCPPKCPSSCPPPCPPPE.

Disordered regions lie at residues 1–26 (MSSDDKSKSNDPKTEPKNCDPKCEQK) and 47–94 (CPRE…PPPE). Pro residues predominate over residues 53–94 (PAPPKCPPCPSPSPSSCPPKPCAKPCPPKCPSSCPPPCPPPE).

The protein belongs to the cornifin (SPRR) family.

This is Late cornified envelope-like proline-rich protein 1 (LELP1) from Macaca fascicularis (Crab-eating macaque).